The sequence spans 609 residues: Arginine--tRNA ligase (609 aa).

A 'HIGH' region motif is present at residues 132 to 142 (ANPTSSLHVGH).

The protein belongs to the class-I aminoacyl-tRNA synthetase family. As to quaternary structure, monomer.

It is found in the cytoplasm. It carries out the reaction tRNA(Arg) + L-arginine + ATP = L-arginyl-tRNA(Arg) + AMP + diphosphate. This Psychrobacter arcticus (strain DSM 17307 / VKM B-2377 / 273-4) protein is Arginine--tRNA ligase.